A 478-amino-acid chain; its full sequence is Probable serine protease do-like (478 aa).

An N-terminal signal peptide occupies residues 1 to 26 (MKKSAIILSKIILILTLLLSFGMSWN). An intrachain disulfide couples Cys-87 to Cys-99. Residues 116-254 (GSGVIINADK…LKGELIGINT (139 aa)) form a serine protease region. Active-site charge relay system residues include His-133, Asp-163, and Ser-238. PDZ domains follow at residues 281 to 372 (QMVQ…VFRE) and 387 to 469 (KHNL…IKRG).

It belongs to the peptidase S1C family.

The chain is Probable serine protease do-like (degP) from Buchnera aphidicola subsp. Acyrthosiphon pisum (strain APS) (Acyrthosiphon pisum symbiotic bacterium).